We begin with the raw amino-acid sequence, 300 residues long: Formyltetrahydrofolate deformylase (300 aa).

Residues 21 to 102 enclose the ACT domain; the sequence is RLLVSCPDQP…MTWSLTLASE (82 aa). Aspartate 244 is an active-site residue.

The protein belongs to the PurU family.

The catalysed reaction is (6R)-10-formyltetrahydrofolate + H2O = (6S)-5,6,7,8-tetrahydrofolate + formate + H(+). The protein operates within purine metabolism; IMP biosynthesis via de novo pathway; formate from 10-formyl-5,6,7,8-tetrahydrofolate: step 1/1. In terms of biological role, catalyzes the hydrolysis of 10-formyltetrahydrofolate (formyl-FH4) to formate and tetrahydrofolate (FH4). The chain is Formyltetrahydrofolate deformylase from Bacillus subtilis (strain 168).